A 262-amino-acid chain; its full sequence is 3-methyl-2-oxobutanoate hydroxymethyltransferase (262 aa).

2 residues coordinate Mg(2+): aspartate 43 and aspartate 82. 3-methyl-2-oxobutanoate contacts are provided by residues 43–44 (DS), aspartate 82, and lysine 111. Mg(2+) is bound at residue glutamate 113. Glutamate 180 functions as the Proton acceptor in the catalytic mechanism.

It belongs to the PanB family. Homodecamer; pentamer of dimers. It depends on Mg(2+) as a cofactor.

The protein localises to the cytoplasm. It carries out the reaction 3-methyl-2-oxobutanoate + (6R)-5,10-methylene-5,6,7,8-tetrahydrofolate + H2O = 2-dehydropantoate + (6S)-5,6,7,8-tetrahydrofolate. The protein operates within cofactor biosynthesis; coenzyme A biosynthesis. Functionally, catalyzes the reversible reaction in which hydroxymethyl group from 5,10-methylenetetrahydrofolate is transferred onto alpha-ketoisovalerate to form ketopantoate. The protein is 3-methyl-2-oxobutanoate hydroxymethyltransferase of Pyrobaculum aerophilum (strain ATCC 51768 / DSM 7523 / JCM 9630 / CIP 104966 / NBRC 100827 / IM2).